The sequence spans 496 residues: Probable zinc metalloprotease SNOG_06590 (496 aa).

The signal sequence occupies residues 1 to 20 (MRSSMFFAVCAAAALQTALS). N-linked (GlcNAc...) asparagine glycosylation occurs at N138. Residues H161, D181, and E226 each contribute to the Zn(2+) site. Residue N241 is glycosylated (N-linked (GlcNAc...) asparagine). D253 serves as a coordination point for Zn(2+). N-linked (GlcNAc...) asparagine glycosylation is found at N282, N361, N409, N415, and N457. In terms of domain architecture, Fibronectin type-III spans 402–496 (EPMNVGINTT…PFPFGCTRNC (95 aa)).

It belongs to the peptidase M28 family. M28B subfamily. The cofactor is Zn(2+).

It localises to the secreted. In Phaeosphaeria nodorum (strain SN15 / ATCC MYA-4574 / FGSC 10173) (Glume blotch fungus), this protein is Probable zinc metalloprotease SNOG_06590.